The chain runs to 112 residues: Transmembrane protein 14 homolog (112 aa).

Transmembrane regions (helical) follow at residues 9 to 26, 36 to 53, 60 to 77, and 87 to 109; these read FKLN…GVIG, LIAG…AYYL, VGLG…GVMG, and IPII…LYNI.

This sequence belongs to the TMEM14 family.

It is found in the membrane. This Dictyostelium discoideum (Social amoeba) protein is Transmembrane protein 14 homolog.